Here is a 343-residue protein sequence, read N- to C-terminus: S-adenosylmethionine:tRNA ribosyltransferase-isomerase (343 aa).

Belongs to the QueA family. Monomer.

The protein localises to the cytoplasm. It catalyses the reaction 7-aminomethyl-7-carbaguanosine(34) in tRNA + S-adenosyl-L-methionine = epoxyqueuosine(34) in tRNA + adenine + L-methionine + 2 H(+). It participates in tRNA modification; tRNA-queuosine biosynthesis. In terms of biological role, transfers and isomerizes the ribose moiety from AdoMet to the 7-aminomethyl group of 7-deazaguanine (preQ1-tRNA) to give epoxyqueuosine (oQ-tRNA). This is S-adenosylmethionine:tRNA ribosyltransferase-isomerase from Coxiella burnetii (strain RSA 331 / Henzerling II).